A 231-amino-acid chain; its full sequence is Large ribosomal subunit protein uL1 (231 aa).

The protein belongs to the universal ribosomal protein uL1 family. In terms of assembly, part of the 50S ribosomal subunit.

Functionally, binds directly to 23S rRNA. The L1 stalk is quite mobile in the ribosome, and is involved in E site tRNA release. In terms of biological role, protein L1 is also a translational repressor protein, it controls the translation of the L11 operon by binding to its mRNA. The chain is Large ribosomal subunit protein uL1 from Cellvibrio japonicus (strain Ueda107) (Pseudomonas fluorescens subsp. cellulosa).